Here is a 204-residue protein sequence, read N- to C-terminus: TPR repeat-containing protein RHE_CH03534.1 (204 aa).

The first 29 residues, Met1–Ala29, serve as a signal peptide directing secretion. 3 TPR repeats span residues Ile84–Tyr117, Ala118–His151, and Gly153–Asp185.

The protein is TPR repeat-containing protein RHE_CH03534.1 of Rhizobium etli (strain ATCC 51251 / DSM 11541 / JCM 21823 / NBRC 15573 / CFN 42).